The primary structure comprises 225 residues: Probable methylthioribulose-1-phosphate dehydratase (225 aa).

Cysteine 86 is a binding site for substrate. Residues histidine 104 and histidine 106 each contribute to the Zn(2+) site. Catalysis depends on glutamate 127, which acts as the Proton donor/acceptor. A Zn(2+)-binding site is contributed by histidine 183.

It belongs to the aldolase class II family. MtnB subfamily. Requires Zn(2+) as cofactor.

It is found in the cytoplasm. It catalyses the reaction 5-(methylsulfanyl)-D-ribulose 1-phosphate = 5-methylsulfanyl-2,3-dioxopentyl phosphate + H2O. It functions in the pathway amino-acid biosynthesis; L-methionine biosynthesis via salvage pathway; L-methionine from S-methyl-5-thio-alpha-D-ribose 1-phosphate: step 2/6. In terms of biological role, catalyzes the dehydration of methylthioribulose-1-phosphate (MTRu-1-P) into 2,3-diketo-5-methylthiopentyl-1-phosphate (DK-MTP-1-P). This is Probable methylthioribulose-1-phosphate dehydratase from Leishmania braziliensis.